A 364-amino-acid polypeptide reads, in one-letter code: tRNA N6-adenosine threonylcarbamoyltransferase (364 aa).

Fe cation is bound by residues His-115 and His-119. Residues 137–141 (LVSGG), Asp-170, Gly-183, and Asn-288 each bind substrate. Asp-316 is a binding site for Fe cation.

Belongs to the KAE1 / TsaD family. Fe(2+) is required as a cofactor.

It localises to the cytoplasm. It carries out the reaction L-threonylcarbamoyladenylate + adenosine(37) in tRNA = N(6)-L-threonylcarbamoyladenosine(37) in tRNA + AMP + H(+). Required for the formation of a threonylcarbamoyl group on adenosine at position 37 (t(6)A37) in tRNAs that read codons beginning with adenine. Is involved in the transfer of the threonylcarbamoyl moiety of threonylcarbamoyl-AMP (TC-AMP) to the N6 group of A37, together with TsaE and TsaB. TsaD likely plays a direct catalytic role in this reaction. The polypeptide is tRNA N6-adenosine threonylcarbamoyltransferase (Bartonella tribocorum (strain CIP 105476 / IBS 506)).